The chain runs to 680 residues: Methionine--tRNA ligase (680 aa).

Residues 15-25 carry the 'HIGH' region motif; it reads PYANGPVHIGH. Zn(2+)-binding residues include Cys-147, Cys-150, Cys-160, and Cys-163. The 'KMSKS' region motif lies at 332–336; sequence KISTS. Residue Thr-335 participates in ATP binding. A tRNA-binding domain is found at 578–680; sequence EFEKLDIRVG…REVKPGSEVK (103 aa).

This sequence belongs to the class-I aminoacyl-tRNA synthetase family. MetG type 1 subfamily. Homodimer. Zn(2+) serves as cofactor.

Its subcellular location is the cytoplasm. It catalyses the reaction tRNA(Met) + L-methionine + ATP = L-methionyl-tRNA(Met) + AMP + diphosphate. In terms of biological role, is required not only for elongation of protein synthesis but also for the initiation of all mRNA translation through initiator tRNA(fMet) aminoacylation. The protein is Methionine--tRNA ligase of Phocaeicola vulgatus (strain ATCC 8482 / DSM 1447 / JCM 5826 / CCUG 4940 / NBRC 14291 / NCTC 11154) (Bacteroides vulgatus).